Reading from the N-terminus, the 130-residue chain is Small ribosomal subunit protein uS8 (130 aa).

This sequence belongs to the universal ribosomal protein uS8 family. In terms of assembly, part of the 30S ribosomal subunit. Contacts proteins S5 and S12.

In terms of biological role, one of the primary rRNA binding proteins, it binds directly to 16S rRNA central domain where it helps coordinate assembly of the platform of the 30S subunit. The chain is Small ribosomal subunit protein uS8 from Phytoplasma mali (strain AT).